The primary structure comprises 513 residues: Maturase K (513 aa).

Belongs to the intron maturase 2 family. MatK subfamily.

The protein localises to the plastid. It localises to the chloroplast. In terms of biological role, usually encoded in the trnK tRNA gene intron. Probably assists in splicing its own and other chloroplast group II introns. The protein is Maturase K of Typha angustifolia (Narrow leaf cattail).